The chain runs to 726 residues: ATP-dependent permease MDL1, mitochondrial (726 aa).

Residues 1–112 constitute a mitochondrion transit peptide; it reads MDPIRFGLSR…LAFLKLCVRH (112 aa). N-linked (GlcNAc...) asparagine glycans are attached at residues N66, N113, and N132. 5 helical membrane-spanning segments follow: residues 158–178, 196–216, 306–326, 386–406, and 423–443; these read FFIA…IPYI, IMGI…FLGS, GYMS…GEYV, GIFF…ILAL, and SFLL…GCFT. In terms of domain architecture, ABC transmembrane type-1 spans 158–447; sequence FFIAGSLLLV…LSGCFTDIMK (290 aa). One can recognise an ABC transporter domain in the interval 482–719; it reads LSFRNVGFAY…GTNFYKLMRW (238 aa). N502 carries an N-linked (GlcNAc...) asparagine glycan. Residue 517–524 coordinates ATP; that stretch reads APSGGGKS. N-linked (GlcNAc...) asparagine glycosylation is found at N584, N598, and N668.

The protein belongs to the ABC transporter superfamily. ABCB family. Mitochondrial peptide exporter (TC 3.A.1.212) subfamily.

Its subcellular location is the mitochondrion inner membrane. Mediates export of peptides generated upon proteolysis of mitochondrial inner membrane proteins. This Schizosaccharomyces pombe (strain 972 / ATCC 24843) (Fission yeast) protein is ATP-dependent permease MDL1, mitochondrial (mdl1).